We begin with the raw amino-acid sequence, 65 residues long: Conopeptide Vt3.2 (65 aa).

The first 12 residues, 1–12 (LLFPLATLQLNA), serve as a signal peptide directing secretion. Residues 13-48 (DQPVERNAENIQDLNPDKRFIFMPVPRRRGPYGSVH) constitute a propeptide that is removed on maturation. Serine 64 carries the post-translational modification Serine amide.

Belongs to the conotoxin M superfamily. Homodimer; disulfide-linked. In terms of tissue distribution, expressed by the venom duct.

The protein resides in the secreted. The polypeptide is Conopeptide Vt3.2 (Conus planorbis (Planorbis cone)).